A 259-amino-acid chain; its full sequence is Pro-opiomelanocortin (259 aa).

A signal peptide spans 1–22 (MLRSVWVYSLGLAVLLQQSGRE). Glutamine 23 carries the post-translational modification Pyrrolidone carboxylic acid. Intrachain disulfides connect cysteine 24–cysteine 46 and cysteine 30–cysteine 42. Residues 113 to 142 (PQAEEEMEESESSQQQRREDKRSYSMEHFR) are disordered. Residues 128–142 (QRREDKRSYSMEHFR) show a composition bias toward basic and acidic residues. Valine 147 bears the Valine amide mark.

The protein belongs to the POMC family. Specific enzymatic cleavages at paired basic residues yield the different active peptides.

It is found in the secreted. In terms of biological role, stimulates the adrenal glands to release cortisol. Its function is as follows. Anorexigenic peptide. Increases the pigmentation of skin by increasing melanin production in melanocytes. Functionally, increases the pigmentation of skin by increasing melanin production in melanocytes. Endogenous orexigenic opiate. In terms of biological role, endogenous opiate. This Lepisosteus osseus (Long-nosed gar) protein is Pro-opiomelanocortin (pomc).